A 341-amino-acid chain; its full sequence is Protein quaking-A (341 aa).

Residues 87 to 153 (FVPVKEYPDY…WEHLNEDLHV (67 aa)) enclose the KH domain. The SH3-binding motif lies at 276 to 279 (PPTP). Positions 324 to 330 (RVHPYQR) match the Nuclear localization signal motif.

Belongs to the quaking family. In terms of assembly, homodimer; does not require RNA to homodimerize.

The protein resides in the cytoplasm. It is found in the nucleus. Functionally, RNA reader protein, which recognizes and binds specific RNAs, thereby regulating RNA metabolic processes, such as pre-mRNA splicing, circular RNA (circRNA) formation, mRNA export, mRNA stability and/or translation. Involved in various cellular processes, such as mRNA storage into stress granules, apoptosis, interferon response, glial cell fate and development. Binds to the 5'-NACUAAY-N(1,20)-UAAY-3' RNA core sequence. Acts as a mRNA modification reader that specifically recognizes and binds mRNA transcripts modified by internal N(7)-methylguanine (m7G). Promotes the formation of circular RNAs (circRNAs): acts by binding to sites flanking circRNA-forming exons. CircRNAs are produced by back-splicing circularization of pre-mRNAs. Required to protect and promote stability of mRNAs which promotes oligodendrocyte differentiation. Acts as an important regulator of muscle development: required during early skeletal myofibril formation by regulating the accumulation of the muscle-specific tropomyosin-3 (tpm3) transcripts. In Danio rerio (Zebrafish), this protein is Protein quaking-A.